A 107-amino-acid chain; its full sequence is Ig kappa chain V-VI region XRPC 44 (107 aa).

Positions 1–23 (EIVLTQSPAITAASLGQKVTITC) are framework-1. Cysteines 23 and 87 form a disulfide. Positions 24 to 33 (SASSSVSYMH) are complementarity-determining-1. The interval 34-48 (WYQQKSGTSPKPWIY) is framework-2. The interval 49-55 (EISKLAS) is complementarity-determining-2. A framework-3 region spans residues 56-87 (GVPARFSGSGSGTSYSLTISSMEAEDAAIYYC). The interval 88 to 96 (QQWNYPLWT) is complementarity-determining-3. The interval 97 to 106 (FGGGTKLEIK) is framework-4.

The protein is Ig kappa chain V-VI region XRPC 44 of Mus musculus (Mouse).